The primary structure comprises 506 residues: Glutamate--tRNA ligase (506 aa).

The short motif at 23-33 is the 'HIGH' region element; the sequence is PSPTGTPHVGL. Residues 267 to 271 carry the 'KMSKS' region motif; the sequence is KLSKR. K270 is an ATP binding site.

Belongs to the class-I aminoacyl-tRNA synthetase family. Glutamate--tRNA ligase type 1 subfamily. Monomer.

It localises to the cytoplasm. It catalyses the reaction tRNA(Glu) + L-glutamate + ATP = L-glutamyl-tRNA(Glu) + AMP + diphosphate. Catalyzes the attachment of glutamate to tRNA(Glu) in a two-step reaction: glutamate is first activated by ATP to form Glu-AMP and then transferred to the acceptor end of tRNA(Glu). This chain is Glutamate--tRNA ligase, found in Clavibacter michiganensis subsp. michiganensis (strain NCPPB 382).